The sequence spans 637 residues: Probable serine/threonine-protein kinase DDB_G0283065 (637 aa).

Disordered regions lie at residues 36–88 and 155–234; these read NNNN…KFNR and NSNN…RFNN. A compositionally biased stretch (low complexity) spans 53-85; sequence NNSTTKSIDNNNNNTNNSNSNNNNNDNIKNNNK. In terms of domain architecture, Protein kinase spans 236 to 629; sequence FNDVRVLGKG…NQISTDYDNF (394 aa). Residues 242 to 250 and Lys265 contribute to the ATP site; that span reads LGKGGFGIV. Catalysis depends on Asp479, which acts as the Proton acceptor.

Belongs to the protein kinase superfamily. Ser/Thr protein kinase family. GCN2 subfamily.

The enzyme catalyses L-seryl-[protein] + ATP = O-phospho-L-seryl-[protein] + ADP + H(+). It catalyses the reaction L-threonyl-[protein] + ATP = O-phospho-L-threonyl-[protein] + ADP + H(+). This is Probable serine/threonine-protein kinase DDB_G0283065 from Dictyostelium discoideum (Social amoeba).